The primary structure comprises 480 residues: Probable G-protein coupled receptor Mth-like 6 (480 aa).

Positions 1-20 are cleaved as a signal peptide; the sequence is MLLNILAIILVFVISSQSEA. The Extracellular segment spans residues 21–202; that stretch reads VIPGCDYFDT…LEHVYIPKSM (182 aa). Disulfide bonds link Cys25-Cys78, Cys80-Cys85, Cys89-Cys179, and Cys90-Cys101. The N-linked (GlcNAc...) asparagine glycan is linked to Asn40. Asn160 and Asn170 each carry an N-linked (GlcNAc...) asparagine glycan. Residues 203 to 225 form a helical membrane-spanning segment; that stretch reads PAVPQVGTISMVGCILTIAVYLY. The Cytoplasmic segment spans residues 226 to 231; the sequence is IKKLRN. Residues 232 to 254 traverse the membrane as a helical segment; the sequence is LLGKCFICYVFCKFVQYLIWAGG. Residues 255–263 are Extracellular-facing; the sequence is DLNLWNNIC. A helical transmembrane segment spans residues 264-283; sequence SLAGYTNYFFALASHFWLSV. The Cytoplasmic portion of the chain corresponds to 284–303; sequence MSHQIWKNLRLINRDERSYH. Residues 304–326 traverse the membrane as a helical segment; that stretch reads FLIYNIYGWGTPAIMTAITYLVD. Residues 327-356 are Extracellular-facing; that stretch reads WAWEDRPDKLNWIPGVGLYRCWINTYDWSA. A helical membrane pass occupies residues 357-379; it reads MIYLYGPMLILSLFNVVTFILTV. At 380-405 the chain is on the cytoplasmic side; that stretch reads NHIMKIKSSVKSSTQQQRKCIQNNDF. A helical membrane pass occupies residues 406–428; it reads LLYLRLSVMMGVTGISEVITYFV. Over 429–437 the chain is Extracellular; it reads KRHKFWRQV. The chain crosses the membrane as a helical span at residues 438–457; that stretch reads LRVPNFFHLGSGIVVFVLFI. Over 458–480 the chain is Cytoplasmic; the sequence is LKRSTFQMIMERISGPRRQQPAS.

This sequence belongs to the G-protein coupled receptor 2 family. Mth subfamily.

Its subcellular location is the cell membrane. The chain is Probable G-protein coupled receptor Mth-like 6 (mthl6) from Drosophila melanogaster (Fruit fly).